The following is a 339-amino-acid chain: NADH-quinone oxidoreductase subunit H (339 aa).

Helical transmembrane passes span 19–39, 87–107, 120–140, 153–173, 191–211, 253–273, 275–295, and 310–330; these read LLKIIAIVGPLMGAVAYLTLA, FLLGPVLAIAPALAAWAVVPF, LLYILAMTSVGVYGVIIAGWA, SAAQIVSYEIAMGFALVGVLM, FWEWYWLPLFPLFIVYFISAV, ILVAMLAALMFLGGWLSPVPF, PDSILWLLFKVAALLFFFLWF, and LGWKVFIPVTLVWILFVGAMM.

Belongs to the complex I subunit 1 family. In terms of assembly, NDH-1 is composed of 14 different subunits. Subunits NuoA, H, J, K, L, M, N constitute the membrane sector of the complex.

The protein localises to the cell inner membrane. It catalyses the reaction a quinone + NADH + 5 H(+)(in) = a quinol + NAD(+) + 4 H(+)(out). Functionally, NDH-1 shuttles electrons from NADH, via FMN and iron-sulfur (Fe-S) centers, to quinones in the respiratory chain. The immediate electron acceptor for the enzyme in this species is believed to be ubiquinone. Couples the redox reaction to proton translocation (for every two electrons transferred, four hydrogen ions are translocated across the cytoplasmic membrane), and thus conserves the redox energy in a proton gradient. This subunit may bind ubiquinone. In Methylobacillus flagellatus (strain ATCC 51484 / DSM 6875 / VKM B-1610 / KT), this protein is NADH-quinone oxidoreductase subunit H.